Here is a 393-residue protein sequence, read N- to C-terminus: Acetylornithine aminotransferase (393 aa).

Residues 100 to 101 and F133 each bind pyridoxal 5'-phosphate; that span reads GA. A N(2)-acetyl-L-ornithine-binding site is contributed by R136. Residue 218–221 participates in pyridoxal 5'-phosphate binding; that stretch reads DEVQ. K247 is modified (N6-(pyridoxal phosphate)lysine). S274 lines the N(2)-acetyl-L-ornithine pocket. T275 is a binding site for pyridoxal 5'-phosphate.

Belongs to the class-III pyridoxal-phosphate-dependent aminotransferase family. ArgD subfamily. Homodimer. It depends on pyridoxal 5'-phosphate as a cofactor.

It is found in the cytoplasm. It catalyses the reaction N(2)-acetyl-L-ornithine + 2-oxoglutarate = N-acetyl-L-glutamate 5-semialdehyde + L-glutamate. Its pathway is amino-acid biosynthesis; L-arginine biosynthesis; N(2)-acetyl-L-ornithine from L-glutamate: step 4/4. The polypeptide is Acetylornithine aminotransferase (Caldanaerobacter subterraneus subsp. tengcongensis (strain DSM 15242 / JCM 11007 / NBRC 100824 / MB4) (Thermoanaerobacter tengcongensis)).